Reading from the N-terminus, the 409-residue chain is Outer membrane protein YopM (409 aa).

LRR repeat units follow at residues 72 to 91 (QAHE…ELPP), 92 to 113 (HLES…PQSL), 114 to 131 (KSLL…DLPP), 132 to 153 (LLEY…QNSS), 154 to 173 (FLKI…DLPP), 174 to 195 (SLEF…QNLP), 196 to 215 (FLTA…DLPL), 216 to 237 (SLES…QNLP), 238 to 257 (FLTT…DLPP), 258 to 279 (SLEA…PQSL), 280 to 297 (TFLD…ELPP), 298 to 317 (NLYY…DLPP), 318 to 339 (SLEE…PPRL), 340 to 357 (ERLI…ELPQ), and 358 to 379 (NLKQ…PESV). The Ca(2+) site is built by asparagine 246 and aspartate 266. 3 residues coordinate Ca(2+): asparagine 307, glutamate 308, and asparagine 326.

This sequence belongs to the LRR-containing bacterial E3 ligase family. Homotetramer forming a hollow cylinder with an inner diameter of approximately 35 angstroms.

The protein localises to the cell outer membrane. It is found in the secreted. Effector proteins function to alter host cell physiology and promote bacterial survival in host tissues. In Yersinia pestis, this protein is Outer membrane protein YopM (yopM).